The following is a 202-amino-acid chain: Small ribosomal subunit protein uS4c (202 aa).

One can recognise an S4 RNA-binding domain in the interval 90 to 151; sequence MRLDNTIFRL…KQKSRFIITK (62 aa).

It belongs to the universal ribosomal protein uS4 family. As to quaternary structure, part of the 30S ribosomal subunit. Contacts protein S5. The interaction surface between S4 and S5 is involved in control of translational fidelity.

It localises to the plastid. Its subcellular location is the chloroplast. Functionally, one of the primary rRNA binding proteins, it binds directly to 16S rRNA where it nucleates assembly of the body of the 30S subunit. In terms of biological role, with S5 and S12 plays an important role in translational accuracy. This is Small ribosomal subunit protein uS4c (rps4) from Plagiochila adianthoides (Liverwort).